The primary structure comprises 874 residues: Bifunctional uridylyltransferase/uridylyl-removing enzyme (874 aa).

Residues 1–336 are uridylyltransferase; sequence MIDTSTITNP…DNGKTVETIQ (336 aa). The interval 337 to 695 is uridylyl-removing; it reads LSDDFQIRGH…LSKKATRGGT (359 aa). The 123-residue stretch at 455-577 folds into the HD domain; sequence VDEHSVRLIK…VRDEERLDYL (123 aa). ACT domains follow at residues 696 to 779 and 802 to 874; these read EVFV…RAPR and TMEL…TPQD.

This sequence belongs to the GlnD family. The cofactor is Mg(2+).

It catalyses the reaction [protein-PII]-L-tyrosine + UTP = [protein-PII]-uridylyl-L-tyrosine + diphosphate. The enzyme catalyses [protein-PII]-uridylyl-L-tyrosine + H2O = [protein-PII]-L-tyrosine + UMP + H(+). Its activity is regulated as follows. Uridylyltransferase (UTase) activity is inhibited by glutamine, while glutamine activates uridylyl-removing (UR) activity. In terms of biological role, modifies, by uridylylation and deuridylylation, the PII regulatory proteins (GlnB and homologs), in response to the nitrogen status of the cell that GlnD senses through the glutamine level. Under low glutamine levels, catalyzes the conversion of the PII proteins and UTP to PII-UMP and PPi, while under higher glutamine levels, GlnD hydrolyzes PII-UMP to PII and UMP (deuridylylation). Thus, controls uridylylation state and activity of the PII proteins, and plays an important role in the regulation of nitrogen assimilation and metabolism. This is Bifunctional uridylyltransferase/uridylyl-removing enzyme from Photobacterium profundum (strain SS9).